We begin with the raw amino-acid sequence, 97 residues long: Large ribosomal subunit protein bL28 (97 aa).

This sequence belongs to the bacterial ribosomal protein bL28 family.

The protein is Large ribosomal subunit protein bL28 of Brucella abortus (strain S19).